The chain runs to 622 residues: Polypeptide N-acetylgalactosaminyltransferase 6 (622 aa).

Residues 1–8 (MRLLRRRH) lie on the Cytoplasmic side of the membrane. A helical; Signal-anchor for type II membrane protein membrane pass occupies residues 9–28 (MPLRLAMVGCAFVLFLFLLH). The Lumenal portion of the chain corresponds to 29–622 (RDVSSREEAT…SDPHQLWLFV (594 aa)). Residue Asn86 is glycosylated (N-linked (GlcNAc...) asparagine). Intrachain disulfides connect Cys165-Cys402 and Cys393-Cys474. The tract at residues 176-285 (LATTSVIIVF…HGWLEPLLAR (110 aa)) is catalytic subdomain A. The Mn(2+) site is built by Asp269, His271, and His407. The interval 348 to 410 (PIKSPTFAGG…PCSVVGHVFR (63 aa)) is catalytic subdomain B. N-linked (GlcNAc...) asparagine glycosylation is present at Asn476. Residues 506-622 (TNQCLDVGEN…SDPHQLWLFV (117 aa)) enclose the Ricin B-type lectin domain. A disulfide bridge connects residues Cys509 and Cys527. The UDP-N-acetyl-alpha-D-galactosamine site is built by Asp511, Glu514, His528, and Asn533. Cystine bridges form between Cys553–Cys566 and Cys597–Cys610.

Belongs to the glycosyltransferase 2 family. GalNAc-T subfamily. Requires Mn(2+) as cofactor. In terms of tissue distribution, expressed in placenta and trachea. Weakly expressed in brain and pancreas. Expressed in fibroblast. Weakly or not expressed in lung, liver, muscle, kidney, spleen, thymus, prostate, testis, ovary, intestine, colon, leukocyte, stomach, thyroid, spinal cord, lymph node, trachea, adrenal gland and bone marrow.

It is found in the golgi apparatus membrane. The catalysed reaction is L-seryl-[protein] + UDP-N-acetyl-alpha-D-galactosamine = a 3-O-[N-acetyl-alpha-D-galactosaminyl]-L-seryl-[protein] + UDP + H(+). It catalyses the reaction L-threonyl-[protein] + UDP-N-acetyl-alpha-D-galactosamine = a 3-O-[N-acetyl-alpha-D-galactosaminyl]-L-threonyl-[protein] + UDP + H(+). It participates in protein modification; protein glycosylation. In terms of biological role, catalyzes the initial reaction in O-linked oligosaccharide biosynthesis, the transfer of an N-acetyl-D-galactosamine residue to a serine or threonine residue on the protein receptor. May participate in synthesis of oncofetal fibronectin. Has activity toward MUC1A, MUC2, EA2 and fibronectin peptides. Glycosylates FGF23. This chain is Polypeptide N-acetylgalactosaminyltransferase 6 (GALNT6), found in Homo sapiens (Human).